The primary structure comprises 405 residues: Diaminopimelate decarboxylase (405 aa).

N6-(pyridoxal phosphate)lysine is present on Lys46. Pyridoxal 5'-phosphate contacts are provided by residues Gly225 and Glu259–Arg262. Residues Arg262, Arg298, and Tyr302 each coordinate substrate. The active-site Proton donor is Cys329. Substrate contacts are provided by Glu330 and Tyr358. Pyridoxal 5'-phosphate is bound at residue Tyr358.

This sequence belongs to the Orn/Lys/Arg decarboxylase class-II family. LysA subfamily. Homodimer. Pyridoxal 5'-phosphate is required as a cofactor.

It carries out the reaction meso-2,6-diaminopimelate + H(+) = L-lysine + CO2. Its pathway is amino-acid biosynthesis; L-lysine biosynthesis via DAP pathway; L-lysine from DL-2,6-diaminopimelate: step 1/1. Its function is as follows. Specifically catalyzes the decarboxylation of meso-diaminopimelate (meso-DAP) to L-lysine. The protein is Diaminopimelate decarboxylase of Helicobacter pylori (strain J99 / ATCC 700824) (Campylobacter pylori J99).